The following is a 535-amino-acid chain: Putative transcription activator BRLF1 homolog (535 aa).

Positions 384 to 426 are disordered; sequence KTNFPLKRKRQSRNIDPNTPRRPRGRPKGSKTKKRPTCSPALF. The span at 404-419 shows a compositional bias: basic residues; that stretch reads RRPRGRPKGSKTKKRP.

This sequence belongs to the herpesviridae TAF50 family.

Transcription activation. Regulates the delayed-early 110 kDa promoter. This is Putative transcription activator BRLF1 homolog (50) from Saimiriine herpesvirus 2 (strain 11) (SaHV-2).